Reading from the N-terminus, the 144-residue chain is Probable transcription termination protein NusA (144 aa).

The KH domain occupies 101–144 (RTDIVVGVKPEEIGKVIGKEGKNIKLFKDAVSRYFNVNSISVKQ).

It belongs to the NusA family.

The protein resides in the cytoplasm. Functionally, participates in transcription termination. This chain is Probable transcription termination protein NusA, found in Thermoplasma acidophilum (strain ATCC 25905 / DSM 1728 / JCM 9062 / NBRC 15155 / AMRC-C165).